The sequence spans 149 residues: Antitoxin HigA1 (149 aa).

The HTH cro/C1-type domain maps to 42-96 (LIALRKHCQLSQVEVAKRMGVRQPTVSGFEKEPSDPKLSTLQRYARALDARLRLV). The H-T-H motif DNA-binding region spans 53–72 (QVEVAKRMGVRQPTVSGFEK).

Interacts with SecB-like chaperone MT2006.

In terms of biological role, antitoxin component of an atypical, type II toxin-antitoxin chaperone (TAC) system. Probably neutralizes the toxic effects of cognate toxin HigB1, which also requires SecB-like chaperone MT2006 (AC Q7D7P7). Autorepresses its operon (higB1-higA1-MT2006). This chain is Antitoxin HigA1, found in Mycobacterium tuberculosis (strain CDC 1551 / Oshkosh).